The sequence spans 445 residues: Phosphoglucosamine mutase (445 aa).

The active-site Phosphoserine intermediate is S102. The Mg(2+) site is built by S102, D240, D242, and D244. S102 is modified (phosphoserine).

It belongs to the phosphohexose mutase family. Requires Mg(2+) as cofactor. Activated by phosphorylation.

The catalysed reaction is alpha-D-glucosamine 1-phosphate = D-glucosamine 6-phosphate. Functionally, catalyzes the conversion of glucosamine-6-phosphate to glucosamine-1-phosphate. The protein is Phosphoglucosamine mutase of Mycobacterium sp. (strain JLS).